Reading from the N-terminus, the 167-residue chain is MSEVEFSHEYWMRHALTLAKRAWDEREVPVGAVLVHNNRVIGEGWNRPIGRHDPTAHAEIMALRQGGLVMQNYRLIDATLYVTLEPCVMCAGAMIHSRIGRVVFGARDAKTGAAGSLMDVLHHPGMNHRVEITEGILADECAALLSDFFRMRRQEIKAQKKAQSSTD.

Positions 6–117 (FSHEYWMRHA…DAKTGAAGSL (112 aa)) constitute a CMP/dCMP-type deaminase domain. His-57 contributes to the Zn(2+) binding site. Glu-59 serves as the catalytic Proton donor. Positions 87 and 90 each coordinate Zn(2+).

Belongs to the cytidine and deoxycytidylate deaminase family. Homodimer. It depends on Zn(2+) as a cofactor.

The catalysed reaction is adenosine(34) in tRNA + H2O + H(+) = inosine(34) in tRNA + NH4(+). Its function is as follows. Catalyzes the deamination of adenosine to inosine at the wobble position 34 of tRNA(Arg2). Essential for cell viability. In Escherichia coli (strain K12), this protein is tRNA-specific adenosine deaminase.